The chain runs to 359 residues: uncharacterized protein (359 aa).

ATP is bound at residue 46–53 (GPKSSGKS).

The protein belongs to the archaeal ATPase family.

This is an uncharacterized protein from Methanocaldococcus jannaschii (strain ATCC 43067 / DSM 2661 / JAL-1 / JCM 10045 / NBRC 100440) (Methanococcus jannaschii).